Consider the following 508-residue polypeptide: MFS-type transporter penM (508 aa).

The tract at residues 1 to 60 (MKDGEETPSVDGSTSASNREKLGTDLEIGPVDLSDGGKEEKVKDPNLVDWDGPDDPENPL) is disordered. Positions 35–46 (DGGKEEKVKDPN) are enriched in basic and acidic residues. N-linked (GlcNAc...) asparagine glycosylation is present at N61. Residues 73-93 (SIALITFLTPLGSSMFAPGVG) traverse the membrane as a helical segment. N100 carries N-linked (GlcNAc...) asparagine glycosylation. 6 helical membrane passes run 108–128 (SFVV…IAPL), 143–163 (ILYV…SLVV), 166–186 (FFAG…IADM), 197–217 (AAWA…GAYL), 225–245 (WSFY…LFSI), and 299–319 (PIVF…YLLF). The Peroxisomal targeting signal signature appears at 293–307 (KMLFRSPIVFLLSLY). N331 is a glycosylation site (N-linked (GlcNAc...) asparagine). 5 helical membrane-spanning segments follow: residues 335–355 (GAVG…LFLI), 379–399 (LPPM…YGWT), 407–427 (IVPI…FMCV), 435–457 (FTNY…GALL), and 475–495 (SLLG…WIYG).

The protein belongs to the major facilitator superfamily.

It is found in the peroxisome membrane. Its function is as follows. MFS-type transporter involved in penicillin production, most likely through the translocation of isopenicillin N from the cytosol to the peroxisomal lumen across the peroxisomal membrane. The polypeptide is MFS-type transporter penM (Penicillium rubens (strain ATCC 28089 / DSM 1075 / NRRL 1951 / Wisconsin 54-1255) (Penicillium chrysogenum)).